The following is a 519-amino-acid chain: Protein twist (519 aa).

4 disordered regions span residues 53–77 (MQQQQQQQQHQQQQQQHQQQQQQQY), 131–156 (NFEQQQQQQQQQQQQQTATPAGVATA), 301–321 (YEAYDPANSLNGSTYSSSDRD), and 368–389 (FRKPRRRLKRKPSKTEETDEFS). Low complexity-rich tracts occupy residues 54–76 (QQQQQQQQHQQQQQQHQQQQQQQ) and 134–146 (QQQQQQQQQQQQQ). Residues 308-317 (NSLNGSTYSS) show a composition bias toward polar residues. The span at 368 to 379 (FRKPRRRLKRKP) shows a compositional bias: basic residues. Positions 390–441 (NQRVMANVRERQRTQSLNDAFKALQQIIPTLPSDKLSKIQTLKLATRYIDFL) constitute a bHLH domain.

As to quaternary structure, efficient DNA binding requires dimerization with another bHLH protein. Homodimer.

The protein localises to the nucleus. In terms of biological role, involved in the establishment and dorsoventral patterning of germ layers in the embryo. The sequence is that of Protein twist from Drosophila virilis (Fruit fly).